The chain runs to 250 residues: MTSASELFSTRRSRPGRSDPALESDTSSYRHHSHHHHRRHGVHHHNQRHDSDGCDPLRRPTPRLRRFFHHPIQERSRPIRDVQGTSQYLNTDSTDTETQSSSFVNLNGSERLPGAVLLARDRLFERLRGVSLSSNSRSNRVSLDDQRESSFHSIDGDPIFQLAGLQVTYECNKKPQGLTQDAINCLHRQTFSSAEVKSEMRDCSICLESFTKGDMLISLPCTHSFHSSCLNPWLRACGDCPCCRRAIAKE.

Over residues 1-10 the composition is skewed to polar residues; sequence MTSASELFST. The disordered stretch occupies residues 1–106; the sequence is MTSASELFST…ETQSSSFVNL (106 aa). Basic residues predominate over residues 29–47; the sequence is YRHHSHHHHRRHGVHHHNQ. A compositionally biased stretch (basic and acidic residues) spans 48–58; the sequence is RHDSDGCDPLR. A compositionally biased stretch (basic residues) spans 60–69; the sequence is PTPRLRRFFH. Basic and acidic residues predominate over residues 71 to 80; that stretch reads PIQERSRPIR. Residues 91–102 are compositionally biased toward low complexity; the sequence is TDSTDTETQSSS. The RING-type; atypical zinc-finger motif lies at 203 to 244; it reads CSICLESFTKGDMLISLPCTHSFHSSCLNPWLRACGDCPCCR.

The catalysed reaction is S-ubiquitinyl-[E2 ubiquitin-conjugating enzyme]-L-cysteine + [acceptor protein]-L-lysine = [E2 ubiquitin-conjugating enzyme]-L-cysteine + N(6)-ubiquitinyl-[acceptor protein]-L-lysine.. It functions in the pathway protein modification; protein ubiquitination. In terms of biological role, probable E3 ubiquitin-protein ligase that may possess E3 ubiquitin ligase activity in vitro. In Arabidopsis thaliana (Mouse-ear cress), this protein is Probable E3 ubiquitin-protein ligase RHY1A.